We begin with the raw amino-acid sequence, 60 residues long: MKGTPSFGKRNKNLHIRCRRCGKNSYHVRKKVCAACGFGRSRRIRRYSWQNKKITGQRLK.

Zn(2+)-binding residues include cysteine 18, cysteine 21, cysteine 33, and cysteine 36. The segment at 18–36 (CRRCGKNSYHVRKKVCAAC) adopts a C4-type zinc-finger fold.

The protein belongs to the eukaryotic ribosomal protein eL37 family. It depends on Zn(2+) as a cofactor.

Functionally, binds to the 23S rRNA. This is Large ribosomal subunit protein eL37 (rpl37e) from Methanothermobacter thermautotrophicus (strain ATCC 29096 / DSM 1053 / JCM 10044 / NBRC 100330 / Delta H) (Methanobacterium thermoautotrophicum).